A 431-amino-acid polypeptide reads, in one-letter code: MTSYTESSEESGSRMPSEILTSYYDYPTHDQESWWRDTGPLFGRFLKGAGYDVHTQYQYLVFFIKNILPSLGPYPARWRSTITPTGLPIEYSLNFQKNSRPLLRIGFEPLSRFSGTAQDPYNKIATADLLNQLAKVQLHDFDTQLFNHFMNDFDLSRAETEALQKQGGINGKSTVRSQTAFGFDLKGGRVSVKGYAFAGLKNRATGIPVGQLISDSVRKLEPQMHCWDSFSILNDYMEKSDGWNEYSFVSWDCVDIERSRLKLYGVHNAVTWEKVKEMWTLGGRIEEDATIKAGLELLQHMWSLLRIDEGNRDYKGGFAADNGGKTLPIIWNYEINKGSPHPAPKFYFPVHGENDLQVSKSISEFFSHLGWDDHARQYPHLLRQIYPNQNISLTERLQAWISFAYHEHTGPYLSVYYYAAERPPWGSDQVK.

Dimethylallyl diphosphate is bound by residues arginine 104, lysine 193, tyrosine 195, lysine 262, tyrosine 264, tyrosine 347, tyrosine 412, and tyrosine 416.

The protein belongs to the tryptophan dimethylallyltransferase family. In terms of assembly, monomer.

It carries out the reaction cyclo(L-tryptophyl-L-alanyl) + dimethylallyl diphosphate = preechinulin + diphosphate. It functions in the pathway secondary metabolite biosynthesis. It participates in alkaloid biosynthesis. Functionally, reverse prenyltransferase; part of the gene cluster that mediates the biosynthesis of echinulin family alkaloid. The pathway begins with the biosynthesis of the cyclic dipeptide cyclo-L-Trp-L-Ala (cyclo-TA) by the NRPS criC via condensation of L-alanine and L-tryptophan. The prenyltransferase criA then catalyzes the first prenylation step, a reverse prenylation reaction at C2, to yield preechinulin. Preechinulin is the substrate of the cytochrome P450 monooxygenase criE that catalyzes the formation of the double bond between C10 and C11 to produce neoechulin A. The unique prenyltransferase criF functions as a competitive enzyme with criE for preechinulin metabolization and uses preechinulin for effective regiospecific prenylations. Preechinulin is prenylated by criF at C5 or C7. C7-prenylation leads to accumulation of tardioxopiperazine B without further modification by criF. In contrast, the C5-prenylated tardioxopiperazine A can be prenylated again by criF, predominantly at C7 to form echinulin or less frequently at C4 to give variecolorin L. CriF also accepts neoechilunin A to produce varlecolorin G (prenylation at C5) or isoechinulin A (prenylation at C7). CriF further converts isoechinulin A into dehydroechinulin. Moreover, a yet unidentified enzyme can also convert neoechilunin A into neoechilunin B by introducing a double bond between positions C14 and C17 and thus provides a further substrate to criF for C5 and C7 prenylation. The sequence is that of Reverse prenyltransferase criA from Aspergillus cristatus (Chinese Fuzhuan brick tea-fermentation fungus).